The following is a 283-amino-acid chain: Nucleoid occlusion protein (283 aa).

Residues 1-21 (MKHSFSRFFGFGEKEEEPEIA) form a disordered region. The H-T-H motif DNA-binding region spans 148 to 167 (EALAQRLGKGQSTIANKLRL).

Belongs to the ParB family.

The protein localises to the cytoplasm. It localises to the nucleoid. Functionally, effects nucleoid occlusion by binding relatively nonspecifically to DNA and preventing the assembly of the division machinery in the vicinity of the nucleoid, especially under conditions that disturb the cell cycle. It helps to coordinate cell division and chromosome segregation by preventing the formation of the Z ring through the nucleoid, which would cause chromosome breakage. This Bacillus velezensis (strain DSM 23117 / BGSC 10A6 / LMG 26770 / FZB42) (Bacillus amyloliquefaciens subsp. plantarum) protein is Nucleoid occlusion protein.